Reading from the N-terminus, the 428-residue chain is Ribulose bisphosphate carboxylase (428 aa).

K151 (proton acceptor) is an active-site residue. Substrate is bound at residue K153. K177, D179, and E180 together coordinate Mg(2+). The residue at position 177 (K177) is an N6-carboxylysine. H270 (proton acceptor) is an active-site residue. Substrate is bound by residues R271, H303, 354–356 (SGG), and 376–379 (QFGG).

This sequence belongs to the RuBisCO large chain family. Type III subfamily. As to quaternary structure, homodimer or homodecamer. In contrast to form I RuBisCO, the form III RuBisCO is composed solely of large subunits. It depends on Mg(2+) as a cofactor.

It catalyses the reaction 2 (2R)-3-phosphoglycerate + 2 H(+) = D-ribulose 1,5-bisphosphate + CO2 + H2O. It carries out the reaction D-ribulose 1,5-bisphosphate + O2 = 2-phosphoglycolate + (2R)-3-phosphoglycerate + 2 H(+). Functionally, catalyzes the addition of molecular CO(2) and H(2)O to ribulose 1,5-bisphosphate (RuBP), generating two molecules of 3-phosphoglycerate (3-PGA). Functions in an archaeal AMP degradation pathway, together with AMP phosphorylase and R15P isomerase. This chain is Ribulose bisphosphate carboxylase, found in Methanosarcina mazei (strain ATCC BAA-159 / DSM 3647 / Goe1 / Go1 / JCM 11833 / OCM 88) (Methanosarcina frisia).